A 448-amino-acid chain; its full sequence is SVP1-like protein 2 (448 aa).

6 N-linked (GlcNAc...) asparagine glycosylation sites follow: Asn-61, Asn-155, Asn-256, Asn-280, Asn-315, and Asn-421. 2 WD repeats span residues 222–262 (AHKN…LIKE) and 267–306 (VDKA…NTET). The tract at residues 416 to 435 (THYSLNESLRNEDTKSAGEP) is disordered. The segment covering 424-435 (LRNEDTKSAGEP) has biased composition (basic and acidic residues).

It belongs to the WD repeat PROPPIN family. Post-translationally, N-glycosylated.

The protein resides in the endosome membrane. Its subcellular location is the prevacuolar compartment membrane. Its function is as follows. Involved in piecemeal microautophagy of the nucleus (micronucleophagy). The protein is SVP1-like protein 2 (HSV2) of Saccharomyces cerevisiae (strain ATCC 204508 / S288c) (Baker's yeast).